The chain runs to 403 residues: Malate dehydrogenase, chloroplastic (403 aa).

Residues 1–80 (MATATSASLF…DKKPYGFKIN (80 aa)) constitute a chloroplast transit peptide. NAD(+) is bound by residues 89 to 95 (GAAGGIG) and Asp115. Substrate is bound by residues Arg162 and Arg168. Residues Asn175 and 198–200 (ISN) each bind NAD(+). Substrate is bound by residues Asn200 and Arg234. His258 serves as the catalytic Proton acceptor. Met309 is an NAD(+) binding site.

The protein belongs to the LDH/MDH superfamily. MDH type 1 family. As to quaternary structure, homodimer. As to expression, expressed in rosette leaves. Expressed in meristematic regions of roots and shoots, cotyledons, young leaves, trichomes, stamen, pollen, tapetum, gynoecium and ovules.

The protein resides in the plastid. Its subcellular location is the chloroplast stroma. It carries out the reaction (S)-malate + NAD(+) = oxaloacetate + NADH + H(+). In terms of biological role, catalyzes a reversible NAD-dependent dehydrogenase reaction involved in central metabolism and redox homeostasis between organelle compartments. Plays a key role in the metabolism of dark chloroplasts and non-green plastids. Essential for embryo viability. Plays an essential role in heterotrophic metabolism in embryos, and autotrophic metabolism in photosynthetic tissues as well. The sequence is that of Malate dehydrogenase, chloroplastic from Arabidopsis thaliana (Mouse-ear cress).